A 129-amino-acid polypeptide reads, in one-letter code: Biogenesis of lysosome-related organelles complex 1 subunit CNL1 (129 aa).

This sequence belongs to the BLOC1S4 family. Component of the biogenesis of lysosome-related organelles complex-1 (BLOC-1).

It is found in the cytoplasm. Its function is as follows. Component of the biogenesis of lysosome-related organelles complex-1 (BLOC-1), a complex that is involved in endosomal cargo sorting. This Eremothecium gossypii (strain ATCC 10895 / CBS 109.51 / FGSC 9923 / NRRL Y-1056) (Yeast) protein is Biogenesis of lysosome-related organelles complex 1 subunit CNL1 (CLN1).